Here is a 173-residue protein sequence, read N- to C-terminus: Photosystem I assembly protein Ycf3 (173 aa).

TPR repeat units follow at residues 35–68 (AYVY…EENS), 72–105 (SETL…NPNQ), and 120–153 (GRIA…NPGG).

It belongs to the Ycf3 family.

Its subcellular location is the cellular thylakoid membrane. Its function is as follows. Essential for the assembly of the photosystem I (PSI) complex. May act as a chaperone-like factor to guide the assembly of the PSI subunits. This chain is Photosystem I assembly protein Ycf3, found in Synechococcus sp. (strain CC9605).